We begin with the raw amino-acid sequence, 691 residues long: DNA-directed RNA polymerase subunit beta' (691 aa).

Cysteine 69, cysteine 71, cysteine 87, and cysteine 90 together coordinate Zn(2+). Residues aspartate 489, aspartate 491, and aspartate 493 each contribute to the Mg(2+) site.

It belongs to the RNA polymerase beta' chain family. RpoC1 subfamily. In plastids the minimal PEP RNA polymerase catalytic core is composed of four subunits: alpha, beta, beta', and beta''. When a (nuclear-encoded) sigma factor is associated with the core the holoenzyme is formed, which can initiate transcription. The cofactor is Mg(2+). Zn(2+) serves as cofactor.

The protein localises to the plastid. It is found in the chloroplast. It catalyses the reaction RNA(n) + a ribonucleoside 5'-triphosphate = RNA(n+1) + diphosphate. DNA-dependent RNA polymerase catalyzes the transcription of DNA into RNA using the four ribonucleoside triphosphates as substrates. The sequence is that of DNA-directed RNA polymerase subunit beta' from Jasminum nudiflorum (Winter jasmine).